Reading from the N-terminus, the 140-residue chain is uncharacterized protein (140 aa).

The protein localises to the mitochondrion. This is an uncharacterized protein from Homo sapiens (Human).